The primary structure comprises 555 residues: Formate--tetrahydrofolate ligase (555 aa).

Residue 65–72 (TPAGEGKS) coordinates ATP.

The protein belongs to the formate--tetrahydrofolate ligase family.

The enzyme catalyses (6S)-5,6,7,8-tetrahydrofolate + formate + ATP = (6R)-10-formyltetrahydrofolate + ADP + phosphate. Its pathway is one-carbon metabolism; tetrahydrofolate interconversion. The sequence is that of Formate--tetrahydrofolate ligase from Staphylococcus epidermidis (strain ATCC 35984 / DSM 28319 / BCRC 17069 / CCUG 31568 / BM 3577 / RP62A).